The primary structure comprises 159 residues: ATP synthase subunit b (159 aa).

Residues 4 to 24 (VGINGTLIVQLVTFVILVALL) traverse the membrane as a helical segment.

Belongs to the ATPase B chain family. As to quaternary structure, F-type ATPases have 2 components, F(1) - the catalytic core - and F(0) - the membrane proton channel. F(1) has five subunits: alpha(3), beta(3), gamma(1), delta(1), epsilon(1). F(0) has three main subunits: a(1), b(2) and c(10-14). The alpha and beta chains form an alternating ring which encloses part of the gamma chain. F(1) is attached to F(0) by a central stalk formed by the gamma and epsilon chains, while a peripheral stalk is formed by the delta and b chains.

It is found in the cell inner membrane. Its function is as follows. F(1)F(0) ATP synthase produces ATP from ADP in the presence of a proton or sodium gradient. F-type ATPases consist of two structural domains, F(1) containing the extramembraneous catalytic core and F(0) containing the membrane proton channel, linked together by a central stalk and a peripheral stalk. During catalysis, ATP synthesis in the catalytic domain of F(1) is coupled via a rotary mechanism of the central stalk subunits to proton translocation. Component of the F(0) channel, it forms part of the peripheral stalk, linking F(1) to F(0). In Acidithiobacillus ferrooxidans (strain ATCC 23270 / DSM 14882 / CIP 104768 / NCIMB 8455) (Ferrobacillus ferrooxidans (strain ATCC 23270)), this protein is ATP synthase subunit b.